The chain runs to 267 residues: 2-keto-3-deoxy-L-rhamnonate aldolase (267 aa).

The active-site Proton acceptor is the His49. Gln151 lines the substrate pocket. Glu153 contacts Mg(2+). Ala178 and Asp179 together coordinate substrate. Asp179 is a binding site for Mg(2+).

Belongs to the HpcH/HpaI aldolase family. KDR aldolase subfamily. Homohexamer. Requires Mg(2+) as cofactor.

It catalyses the reaction 2-dehydro-3-deoxy-L-rhamnonate = (S)-lactaldehyde + pyruvate. Catalyzes the reversible retro-aldol cleavage of 2-keto-3-deoxy-L-rhamnonate (KDR) to pyruvate and lactaldehyde. This is 2-keto-3-deoxy-L-rhamnonate aldolase from Escherichia coli O157:H7.